A 512-amino-acid polypeptide reads, in one-letter code: Bifunctional purine biosynthesis protein PurH (512 aa).

Residues 1–146 (MTIKRALISV…KNHQDVTVIV (146 aa)) form the MGS-like domain.

Belongs to the PurH family.

The enzyme catalyses (6R)-10-formyltetrahydrofolate + 5-amino-1-(5-phospho-beta-D-ribosyl)imidazole-4-carboxamide = 5-formamido-1-(5-phospho-D-ribosyl)imidazole-4-carboxamide + (6S)-5,6,7,8-tetrahydrofolate. It catalyses the reaction IMP + H2O = 5-formamido-1-(5-phospho-D-ribosyl)imidazole-4-carboxamide. It participates in purine metabolism; IMP biosynthesis via de novo pathway; 5-formamido-1-(5-phospho-D-ribosyl)imidazole-4-carboxamide from 5-amino-1-(5-phospho-D-ribosyl)imidazole-4-carboxamide (10-formyl THF route): step 1/1. It functions in the pathway purine metabolism; IMP biosynthesis via de novo pathway; IMP from 5-formamido-1-(5-phospho-D-ribosyl)imidazole-4-carboxamide: step 1/1. This is Bifunctional purine biosynthesis protein PurH from Bacillus subtilis (strain 168).